Reading from the N-terminus, the 77-residue chain is uncharacterized protein (77 aa).

2 stretches are compositionally biased toward basic and acidic residues: residues 1-24 (CPVAEEHFLVPAHEARGTQGEDQR) and 37-58 (EGPKLGEERPKPEAGALEERGP). Residues 1–77 (CPVAEEHFLV…RHGPKRKPAK (77 aa)) form a disordered region. Positions 66–77 (RPRHGPKRKPAK) are enriched in basic residues.

This is an uncharacterized protein from Macaca fascicularis (Crab-eating macaque).